The primary structure comprises 263 residues: Leukocyte-associated immunoglobulin-like receptor 1 (263 aa).

The first 21 residues, 1–21, serve as a signal peptide directing secretion; that stretch reads MPLHSVIVLVLVLCLGWKSNT. The region spanning 27 to 112 is the Ig-like C2-type domain; sequence SDFTICAEPG…VWSQRSNDLQ (86 aa). Cys49 and Cys96 are disulfide-bonded. The N-linked (GlcNAc...) asparagine glycan is linked to Asn87. A helical membrane pass occupies residues 144-164; that stretch reads ILTVVSVIFLLCLSLFLFCFL. 2 short sequence motifs (ITIM motif) span residues 225–230 and 255–260; these read VTYAQL and STYAAI. Phosphotyrosine occurs at positions 227 and 257.

In terms of assembly, interacts with SH2 domains of tyrosine-protein phosphatases PTPN6 and PTPN11. The interaction with PTPN6 is constitutive. Interacts with the SH2 domain of CSK. Binds with high affinity to extracellular matrix collagens, the interaction is functionally important. Post-translationally, phosphorylation at Tyr-227 and Tyr-257 activates it. May be phosphorylated by LCK. In terms of processing, N-glycosylated. Expressed in lymphoid and non-lymphoid organs.

The protein localises to the membrane. In terms of biological role, functions as an inhibitory receptor that plays a constitutive negative regulatory role on cytolytic function of natural killer (NK) cells, B-cells and T-cells. Activation by Tyr phosphorylation results in recruitment and activation of the phosphatases PTPN6 and PTPN11. It also reduces the increase of intracellular calcium evoked by B-cell receptor ligation. May also play its inhibitory role independently of SH2-containing phosphatases. Modulates cytokine production in CD4+ T-cells, down-regulating IL2 and IFNG production while inducing secretion of transforming growth factor beta. Also down-regulates IgG and IgE production in B-cells as well as IL8, IL10 and TNF secretion. Inhibits proliferation and induces apoptosis in myeloid leukemia cell lines as well as prevents nuclear translocation of NF-kappa-B p65 subunit/RELA and phosphorylation of I-kappa-B alpha/CHUK in these cells. Inhibits the differentiation of peripheral blood precursors towards dendritic cells. This chain is Leukocyte-associated immunoglobulin-like receptor 1 (Lair1), found in Rattus norvegicus (Rat).